We begin with the raw amino-acid sequence, 375 residues long: MQCALYDAGRCRSCQWITQPIPEQLSAKTADLKNLLADFPVEEWCAPVSGPEQGFRNKAKMVVSGSVEKPLLGMLHRDGTPEDLCDCPLYPASFAPVFAALKPFIARAGLTPYNVARKRGELKYILLTESQSDGGMMLRFVLRSETKLAQLRKALPWLQAQLPQLKVITVNIQPVHMAIMEGETEIYLTEQQALVERFNDVPLWIRPQSFFQTNPAVASQLYATARDWVRQLPVKHMWDLFCGVGGFGLHCATPDMQLTGIEIALEAIACAKQSAAELGLTRLQFQALDSTQFATAQGEVPELVLVNPPRRGIGKPLCDYLSTMAPRFIIYSSCNAQTMAKDIRELPGYRIERVQLFDMFPHTAHYEVLTLLVKM.

The [4Fe-4S] cluster site is built by cysteine 3, cysteine 11, cysteine 14, and cysteine 87. Positions 212, 241, 262, and 307 each coordinate S-adenosyl-L-methionine. Catalysis depends on cysteine 334, which acts as the Nucleophile.

It belongs to the class I-like SAM-binding methyltransferase superfamily. RNA M5U methyltransferase family. RlmC subfamily.

It carries out the reaction uridine(747) in 23S rRNA + S-adenosyl-L-methionine = 5-methyluridine(747) in 23S rRNA + S-adenosyl-L-homocysteine + H(+). Catalyzes the formation of 5-methyl-uridine at position 747 (m5U747) in 23S rRNA. In Escherichia coli O157:H7, this protein is 23S rRNA (uracil(747)-C(5))-methyltransferase RlmC.